Here is a 169-residue protein sequence, read N- to C-terminus: Putative pre-16S rRNA nuclease (169 aa).

Positions 1-19 are enriched in basic and acidic residues; sequence MTDSDHRLPDRPGEGDPGR. Residues 1–24 are disordered; sequence MTDSDHRLPDRPGEGDPGRGRRIG.

Belongs to the YqgF nuclease family.

The protein localises to the cytoplasm. Could be a nuclease involved in processing of the 5'-end of pre-16S rRNA. The protein is Putative pre-16S rRNA nuclease of Mycobacterium sp. (strain KMS).